A 1822-amino-acid polypeptide reads, in one-letter code: Integrin beta-4 (1822 aa).

The first 27 residues, 1–27 (MAGPRPSPWARLLLAALISVSLSGTLA), serve as a signal peptide directing secretion. At 28 to 710 (NRCKKAPVKS…HKKKDCPPGS (683 aa)) the chain is on the extracellular side. Residues 29-73 (RCKKAPVKSCTECVRVDKDCAYCTDEMFRDRRCNTQAELLAAGCQ) enclose the PSI domain. 8 disulfides stabilise this stretch: Cys-30–Cys-48, Cys-38–Cys-455, Cys-41–Cys-61, Cys-51–Cys-72, Cys-245–Cys-288, Cys-457–Cys-476, Cys-468–Cys-479, and Cys-481–Cys-490. The 199-residue stretch at 131-329 (DLYILMDFSN…IPIFAVTNYS (199 aa)) folds into the VWFA domain. Mg(2+) is bound by residues Ser-139 and Ser-141. Ser-141, Asp-144, Asp-145, and Asp-176 together coordinate Ca(2+). The involved in NRG1- and IGF1-binding stretch occupies residues 194-199 (WPNSDP). Residues Asn-228, Asp-230, Pro-232, and Glu-233 each contribute to the Ca(2+) site. Residue Glu-233 coordinates Mg(2+). Asn-327 carries N-linked (GlcNAc...) asparagine glycosylation. Glu-350 lines the Ca(2+) pocket. 4 I-EGF domains span residues 457-491 (CELQ…QTCN), 492-537 (CSTG…QFCE), 538-574 (YDNF…PSCD), and 575-615 (CPLS…TICE). N-linked (GlcNAc...) asparagine glycosylation occurs at Asn-491. 11 disulfide bridges follow: Cys-492/Cys-520, Cys-503/Cys-518, Cys-512/Cys-523, Cys-525/Cys-536, Cys-543/Cys-557, Cys-551/Cys-562, Cys-564/Cys-573, Cys-575/Cys-598, Cys-582/Cys-596, Cys-590/Cys-601, and Cys-603/Cys-614. Asn-579 is a glycosylation site (N-linked (GlcNAc...) asparagine). An N-linked (GlcNAc...) asparagine glycan is attached at Asn-617. 4 cysteine pairs are disulfide-bonded: Cys-626/Cys-671, Cys-632/Cys-651, Cys-635/Cys-648, and Cys-680/Cys-706. A glycan (N-linked (GlcNAc...) asparagine) is linked at Asn-695. The chain crosses the membrane as a helical span at residues 711 to 733 (FWWLIPLLLLLLPLLALLLLLCW). Residues 732–749 (CWKYCACCKACLALLPCC) are palmitoylated on several cysteines. The Cytoplasmic portion of the chain corresponds to 734–1822 (KYCACCKACL…THMDQQFFQT (1089 aa)). Ser-771, Ser-1069, and Ser-1119 each carry phosphoserine. In terms of domain architecture, Calx-beta spans 979–1084 (VNITIIKEQA…QVRRFHVQLS (106 aa)). The segment at 1113-1140 (TSQMLSSQPPPHGDLGAPQNPNAKAAGS) is disordered. Fibronectin type-III domains lie at 1129–1218 (APQN…THQE) and 1222–1321 (EPGR…TQPK). The tract at residues 1400–1444 (LSASSGRSSDAEAPHGPPDDGGAGGKGGSLPRSATPGPPGEHLVN) is disordered. The span at 1418-1427 (DDGGAGGKGG) shows a compositional bias: gly residues. 3 positions are modified to phosphoserine: Ser-1454, Ser-1457, and Ser-1474. Thr-1487 is subject to Phosphothreonine. Phosphoserine is present on Ser-1494. The disordered stretch occupies residues 1495–1525 (LTRSEHSHSTTLPRDYSTLTSVSSHDSRLTA). Over residues 1503 to 1518 (STTLPRDYSTLTSVSS) the composition is skewed to polar residues. Phosphothreonine is present on Thr-1530. 2 consecutive Fibronectin type-III domains span residues 1530 to 1625 (TPTR…VHPQ) and 1643 to 1739 (APGP…SQDG). Ser-1791 carries the post-translational modification Phosphoserine.

The protein belongs to the integrin beta chain family. Heterodimer of an alpha and a beta subunit. Beta-4 associates with alpha-6. Interacts (via cytoplasmic region) with COL17A1 (via cytoplasmic region). Interacts (via cytoplasmic region) with DST isoform 3 (via N-terminus). Isoform beta-4a interacts (via cytoplasmic domain) with DST (via N-terminus). Interacts with RAC1. ITGA6:ITGB4 is found in a ternary complex with NRG1 and ERBB3. ITGA6:ITGB4 is found in a ternary complex with IGF1 and IGF1R. ITGA6:ITGB4 interacts with IGF2. Interacts with TMEM268; this interaction prevents ITGB4 degradation. In terms of processing, palmitoylated by DHHC3 at several cysteines of the membrane-proximal region, enhancing stability and cell surface expression. Palmitoylation also promotes secondary association with tertaspanins. As to expression, integrin alpha-6/beta-4 is predominantly expressed by epithelia. Isoform beta-4D is also expressed in colon and placenta. Isoform beta-4E is also expressed in epidermis, lung, duodenum, heart, spleen and stomach.

The protein resides in the cell membrane. It localises to the cell junction. The protein localises to the hemidesmosome. Integrin alpha-6/beta-4 is a receptor for laminin. Plays a critical structural role in the hemidesmosome of epithelial cells. Is required for the regulation of keratinocyte polarity and motility. ITGA6:ITGB4 binds to NRG1 (via EGF domain) and this binding is essential for NRG1-ERBB signaling. ITGA6:ITGB4 binds to IGF1 and this binding is essential for IGF1 signaling. ITGA6:ITGB4 binds to IGF2 and this binding is essential for IGF2 signaling. The chain is Integrin beta-4 (ITGB4) from Homo sapiens (Human).